A 299-amino-acid polypeptide reads, in one-letter code: 4-diphosphocytidyl-2-C-methyl-D-erythritol kinase (299 aa).

Lys-17 is an active-site residue. 103-113 serves as a coordination point for ATP; the sequence is PVASGIGGGSG. Residue Asp-145 is part of the active site.

It belongs to the GHMP kinase family. IspE subfamily.

It carries out the reaction 4-CDP-2-C-methyl-D-erythritol + ATP = 4-CDP-2-C-methyl-D-erythritol 2-phosphate + ADP + H(+). It participates in isoprenoid biosynthesis; isopentenyl diphosphate biosynthesis via DXP pathway; isopentenyl diphosphate from 1-deoxy-D-xylulose 5-phosphate: step 3/6. Catalyzes the phosphorylation of the position 2 hydroxy group of 4-diphosphocytidyl-2C-methyl-D-erythritol. The polypeptide is 4-diphosphocytidyl-2-C-methyl-D-erythritol kinase (Bartonella tribocorum (strain CIP 105476 / IBS 506)).